The primary structure comprises 293 residues: MTTVHQLSGHGPLSRLNIYSGASPYTQRVRPSYELIEAPTRQATNGTGSVSGSPNSSSNSTPANQGSLPSHTNPQLYSSITRKERPELFRSYSGNPRLSKPYASSKLAASSRTASYQAMSYSVSPTSTNSSVATSLNYQSSRETGISKDHWKPDSDVSVCSFPSCSVRFGLFDRRHHCRRCGDIFCALHCDRNIPLTMDVKFCLAGSLYRSCVSCFYEYLKWKQSIDLASSNDITVIESTIAPQQATTHPPSQPKNAVSVPIPKMDSTDSKGELPSESLVLGTVPDNWVWSTF.

The tract at residues 38–75 (APTRQATNGTGSVSGSPNSSSNSTPANQGSLPSHTNPQ) is disordered. Low complexity predominate over residues 44-62 (TNGTGSVSGSPNSSSNSTP). Positions 63-75 (ANQGSLPSHTNPQ) are enriched in polar residues. Residues 156–220 (DVSVCSFPSC…SCVSCFYEYL (65 aa)) form an FYVE-type; degenerate zinc finger. Residues cysteine 178, cysteine 181, cysteine 212, and cysteine 215 each contribute to the Zn(2+) site. The segment covering 242 to 256 (APQQATTHPPSQPKN) has biased composition (polar residues). Residues 242–276 (APQQATTHPPSQPKNAVSVPIPKMDSTDSKGELPS) are disordered. Serine 259 is modified (phosphoserine).

Interacts with the TORC1 complex when activated by glutamine or cysteine.

It is found in the vacuole membrane. Its activity is regulated as follows. Activated by glutamine. Functions as an intracellular glutamine sensor that directly activates the TORC1 signaling pathway, to promote cell growth when glutamine is available. The chain is Glutamine sensor pib2 from Schizosaccharomyces pombe (strain 972 / ATCC 24843) (Fission yeast).